We begin with the raw amino-acid sequence, 314 residues long: Putative S-adenosyl-L-methionine-dependent methyltransferase MMAR_5323 (314 aa).

S-adenosyl-L-methionine is bound by residues D132 and 161–162 (DL).

It belongs to the UPF0677 family.

Functionally, exhibits S-adenosyl-L-methionine-dependent methyltransferase activity. The chain is Putative S-adenosyl-L-methionine-dependent methyltransferase MMAR_5323 from Mycobacterium marinum (strain ATCC BAA-535 / M).